A 1580-amino-acid polypeptide reads, in one-letter code: Adhesion G protein-coupled receptor L3 (1580 aa).

The N-terminal stretch at 1 to 19 (MWPSQLLVFMMLLAPIIHG) is a signal peptide. At 20 to 949 (GKHSERHPAL…VHDLLLDVIT (930 aa)) the chain is on the extracellular side. Residues 23 to 81 (SERHPALASPLRHAERGPGGALPPRHLLQQPAAERATAHRGPGPRGATRGVRGPGAHGA) form a disordered region. The region spanning 103–192 (SCESYPIELR…KYLEVQYECV (90 aa)) is the SUEL-type lectin domain. Disulfide bonds link Cys-104–Cys-134, Cys-113–Cys-191, Cys-146–Cys-178, Cys-159–Cys-165, and Cys-203–Cys-385. Residue Asn-161 is glycosylated (N-linked (GlcNAc...) asparagine). An Olfactomedin-like domain is found at 202–461 (LCPGLLKGVY…VVKYSLDFGP (260 aa)). Residues 317 to 347 (YHDTSPYRWGGKSDIDLAVDENGLWVIYATE) are interaction with FLRT3. Residues Asp-332, Asn-380, Ala-381, and Val-435 each coordinate Ca(2+). A disordered region spans residues 494-540 (EISTTGPLGTGSTTTSTTLRTTTWSPGRSTTPSVSGRRNRSTSTPSP). Residues 496 to 521 (STTGPLGTGSTTTSTTLRTTTWSPGR) are compositionally biased toward low complexity. Residues 522–539 (STTPSVSGRRNRSTSTPS) show a composition bias toward polar residues. Asn-532, Asn-617, Asn-827, Asn-840, Asn-885, and Asn-911 each carry an N-linked (GlcNAc...) asparagine glycan. The 180-residue stretch at 756–935 (DIVRENTDNI…AVLMAHVEVK (180 aa)) folds into the GAIN-B domain. Disulfide bonds link Cys-886–Cys-917 and Cys-905–Cys-919. The segment at 886-935 (CSFWSYSKRTMTGYWSTQGCRLLTTNKTHTTCSCNHLTNFAVLMAHVEVK) is GPS. A stachel region spans residues 923-939 (TNFAVLMAHVEVKHSDA). A helical membrane pass occupies residues 950 to 970 (WVGILLSLVCLLICIFTFCFF). At 971 to 978 (RGLQSDRN) the chain is on the cytoplasmic side. A helical transmembrane segment spans residues 979-999 (TIHKNLCISLFVAELLFLIGI). N-linked (GlcNAc...) asparagine glycosylation occurs at Asn-1000. Residues 1000 to 1007 (NRTDQPIA) are Extracellular-facing. Residues 1008-1028 (CAVFAALLHFFFLAAFTWMFL) form a helical membrane-spanning segment. Over 1029 to 1050 (EGVQLYIMLVEVFESEHSRRKY) the chain is Cytoplasmic. The chain crosses the membrane as a helical span at residues 1051 to 1071 (FYLVGYGMPALIVAVSAAVDY). The Extracellular portion of the chain corresponds to 1072–1088 (RSYGTDKVCWLRLDTYF). A helical transmembrane segment spans residues 1089 to 1109 (IWSFIGPATLIIMLNVIFLGI). At 1110 to 1142 (ALYKMFHHTAILKPESGCLDNINYEDNRPFIKS) the chain is on the cytoplasmic side. Residues 1143–1163 (WVIGAIALLCLLGLTWAFGLM) form a helical membrane-spanning segment. Over 1164-1169 (YINEST) the chain is Extracellular. Asn-1166 carries an N-linked (GlcNAc...) asparagine glycan. A helical membrane pass occupies residues 1170–1190 (VIMAYLFTIFNSLQGMFIFIF). The Cytoplasmic segment spans residues 1191 to 1580 (HCVLQKKVRK…KGPAHLVTSL (390 aa)). Positions 1213–1238 (GRSTESSIGSGKTSGSRTPGRYSTGS) are disordered. The residue at position 1254 (Ser-1254) is a Phosphoserine. Residues 1555 to 1580 (FIVPPNKDGTPPEGSSKGPAHLVTSL) form a disordered region. The PDZ-binding signature appears at 1575–1580 (HLVTSL).

The protein belongs to the G-protein coupled receptor 2 family. LN-TM7 subfamily. As to quaternary structure, heterodimer of 2 chains generated by proteolytic processing; the large extracellular N-terminal fragment and the membrane-bound C-terminal fragment predominantly remain associated and non-covalently linked. Interacts (via olfactomedin-like domain) with FLRT1 (via extracellular domain). Interacts (via olfactomedin-like domain) with FLRT2 (via extracellular domain). Interacts (via olfactomedin-like domain) with FLRT3 (via extracellular domain); the interaction is direct. Interacts (via extracellular domain) with TENM1. Interacts (via extracellular domain) with TENM2. Interacts (via extracellular domain) with TENM3. Identified in a complex with FLRT3 and UNC5B; does not interact with UNC5B by itself. Identified in a complex with FLRT3 and UNC5D; does not interact with UNC5D by itself. Interacts (via PDZ-binding motif) with SHANK3. Interacts (via PDZ-binding motif) with DLG4. In terms of processing, autoproteolytically processed at the GPS region of the GAIN-B domain; this cleavage modulates receptor activity. As to expression, brain-specific distribution but low levels are also detected in lung and spleen.

It localises to the cell membrane. Its subcellular location is the postsynaptic cell membrane. The protein resides in the cell projection. The protein localises to the axon. It is found in the cell junction. Forms a heterodimer of 2 chains generated by proteolytic processing that remain associated through non-covalent interactions mediated by the GAIN-B domain. In the inactivated receptor, the Stachel sequence (also named stalk) is embedded in the GAIN-B domain, where it adopts a beta-strand conformation. On activation, the Stachel moves into the 7 transmembrane region and adopts a twisted hook-shaped configuration that forms contacts within the receptor, leading to coupling of a G-alpha protein, which activates signaling. The cleaved GAIN-B and N-terminal domains can then dissociate from the rest of the receptor. In terms of biological role, orphan adhesion G-protein coupled receptor (aGPCR), which mediates synapse specificity. Ligand binding causes a conformation change that triggers signaling via guanine nucleotide-binding proteins (G proteins) and modulates the activity of downstream effectors. ADGRL3 is coupled with different classes of G alpha proteins, such as G(12)/G(13), G(s), G(i) or G(q), depending on the context. Coupling to G(12)/G(13) G proteins, which mediates the activation Rho small GTPases is the most efficient. Following G-protein coupled receptor activation, associates with cell adhesion molecules that are expressed at the surface of adjacent cells to direct synapse specificity. Specifically mediates the establishment of Schaffer-collateral synapses formed by CA3-region axons on CA1-region pyramidal neurons in the hippocampus. Localizes to postsynaptic spines in excitatory synapses in the S.oriens and S.radiatum and interacts with presynaptic cell adhesion molecules FLRT3 and TENM2, promoting synapse formation. Plays a role in the development of glutamatergic synapses in the cortex. Important in determining the connectivity rates between the principal neurons in the cortex. Functionally, orphan adhesion G-protein coupled receptor (aGPCR), which mediates synapse specificity. Ligand binding causes a conformation change that triggers signaling via guanine nucleotide-binding proteins (G proteins) and modulates the activity of downstream effectors, such as adenylate cyclase. Isoform 1 is specifically coupled to G(s) G proteins and mediates activation of adenylate cyclase activity. Following G-protein coupled receptor activation, undergoes liquid-liquid phase transition, associates with (1) cell adhesion molecules that are expressed at the surface of adjacent cells, as well as (2) PDZ-containing proteins, such as SHANK3 and DLG4, in the cytoplasm to direct synapse formation. The sequence is that of Adhesion G protein-coupled receptor L3 from Bos taurus (Bovine).